Consider the following 471-residue polypeptide: 7-hydroxymethyl chlorophyll a reductase, chloroplastic (471 aa).

A chloroplast-targeting transit peptide spans 1-44 (MARCISFLSTSSSLPCATKPPCCSVSSVLPSSPSSHQCRGRKTS).

It belongs to the FrhB family. Requires FAD as cofactor. Iron-sulfur cluster is required as a cofactor.

It localises to the plastid. The protein localises to the chloroplast. The catalysed reaction is chlorophyll a + 2 oxidized [2Fe-2S]-[ferredoxin] + H2O = 7(1)-hydroxychlorophyll a + 2 reduced [2Fe-2S]-[ferredoxin] + 2 H(+). Its function is as follows. Probable iron-sulfur flavoprotein that converts 7-hydroxymethyl chlorophyll a to chlorophyll a using ferredoxin as a reducing equivalent. Catalyzes the reduction of a hydroxymethyl group to a methyl group. This is 7-hydroxymethyl chlorophyll a reductase, chloroplastic (HCAR) from Oryza sativa subsp. japonica (Rice).